The following is a 91-amino-acid chain: Mercuric transport protein periplasmic component (91 aa).

Positions 1 to 19 (MKKLFASLAIAAVVAPVWA) are cleaved as a signal peptide. Positions 22–88 (QTVTLSVPGM…ATEDAGYPSS (67 aa)) constitute an HMA domain. Hg(2+)-binding residues include cysteine 33 and cysteine 36.

Belongs to the MerP family. In terms of assembly, monomer.

The protein resides in the periplasm. Functionally, involved in mercury resistance. Acts as a mercury scavenger that specifically binds to a mercuric ion in the periplasm and probably passes it to the cytoplasmic mercuric reductase MerA via the mercuric transport protein MerT. In Serratia marcescens, this protein is Mercuric transport protein periplasmic component.